The chain runs to 878 residues: Serine/threonine-protein kinase D2 (878 aa).

A compositionally biased stretch (low complexity) spans 1-12; sequence MATAPSYPAGLP. Positions 1–35 are disordered; it reads MATAPSYPAGLPGSPGPGSPPPPGGLELQSPPPLL. Positions 14 to 35 are enriched in pro residues; that stretch reads SPGPGSPPPPGGLELQSPPPLL. Phosphoserine is present on S30. Position 87 is a phosphotyrosine (Y87). The Phorbol-ester/DAG-type 1 zinc-finger motif lies at 138-188; sequence PHALTVHSYRAPAFCDHCGEMLFGLVRQGLKCDGCGLNYHKRCAFSIPNNC. S197, S198, S200, S203, S206, S212, and S214 each carry phosphoserine. The segment at 224–247 is disordered; sequence RSTTELLPRRPPSSSSSSSASSYT. Over residues 236–245 the composition is skewed to low complexity; that stretch reads SSSSSSSASS. S244 is subject to Phosphoserine; by CSNK1D and CSNK1E. A Phorbol-ester/DAG-type 2 zinc finger spans residues 264–314; that stretch reads PHTFLIHSYTRPTVCQACKKLLKGLFRQGLQCKDCKFNCHKRCATRVPNDC. Residues 343 to 373 are disordered; sequence ESEDSGVIPGSHSENALHASEEEEGEGGKAQ. The region spanning 397 to 509 is the PH domain; that stretch reads TTLREGWVVH…WETAIRQALM (113 aa). Y407 carries the post-translational modification Phosphotyrosine. Y438 carries the phosphotyrosine; by ABL1 modification. S518 is subject to Phosphoserine. A Protein kinase domain is found at 551-807; sequence IFPDEVLGSG…VDKSLSHPWL (257 aa). ATP-binding positions include 557 to 565 and K580; that span reads LGSGQFGVV. Residue D674 is the Proton acceptor of the active site. Position 706 is a phosphoserine; by PKC (S706). Phosphoserine is present on S710. At Y717 the chain carries Phosphotyrosine; by ABL1. The short motif at 724-726 is the Important for ABL1-mediated Tyr-717 phosphorylation element; the sequence is LNQ. Residues 844–869 are disordered; it reads HPLPGSGLPTDRDLGGACPPQDHDMQ. S876 is subject to Phosphoserine; by autocatalysis.

Belongs to the protein kinase superfamily. CAMK Ser/Thr protein kinase family. PKD subfamily. In terms of assembly, interacts (via C-terminus) with LCK. Interacts (via N-terminal AP-rich region) with CIB1 isoform 2. Interacts (via N-terminus and zing-finger domain 1 and 2) with PRKCD in response to oxidative stress; the interaction is independent of PRKD2 tyrosine phosphorylation. Mg(2+) is required as a cofactor. In terms of processing, phosphorylation of Ser-876 correlates with the activation status of the kinase. Ser-706 or/and Ser-710 are probably phosphorylated by PKC. Phosphorylation at Ser-244 by CSNK1D and CSNK1E promotes nuclear localization and substrate targeting. Phosphorylation at Ser-244, Ser-706 and Ser-710 is required for nuclear localization. Phosphorylated at Tyr-438 by ABL1 in response to oxidative stress. Phosphorylated at Tyr-717 by ABL1 specifically in response to oxidative stress; requires prior phosphorylation at Ser-706 or/and Ser-710. In terms of tissue distribution, widely expressed.

Its subcellular location is the cytoplasm. It localises to the cell membrane. The protein localises to the nucleus. The protein resides in the golgi apparatus. It is found in the trans-Golgi network. The enzyme catalyses L-seryl-[protein] + ATP = O-phospho-L-seryl-[protein] + ADP + H(+). It carries out the reaction L-threonyl-[protein] + ATP = O-phospho-L-threonyl-[protein] + ADP + H(+). Its activity is regulated as follows. Activated by DAG and phorbol esters. Phorbol-ester/DAG-type domains bind DAG, mediating translocation to membranes. Autophosphorylation of Ser-710 and phosphorylation of Ser-706 by PKC relieves auto-inhibition by the PH domain. Catalytic activity is further increased by phosphorylation at Tyr-717 in response to oxidative stress. Its function is as follows. Serine/threonine-protein kinase that converts transient diacylglycerol (DAG) signals into prolonged physiological effects downstream of PKC, and is involved in the regulation of cell proliferation via MAPK1/3 (ERK1/2) signaling, oxidative stress-induced NF-kappa-B activation, inhibition of HDAC7 transcriptional repression, signaling downstream of T-cell antigen receptor (TCR) and cytokine production, and plays a role in Golgi membrane trafficking, angiogenesis, secretory granule release and cell adhesion. May potentiate mitogenesis induced by the neuropeptide bombesin by mediating an increase in the duration of MAPK1/3 (ERK1/2) signaling, which leads to accumulation of immediate-early gene products including FOS that stimulate cell cycle progression. In response to oxidative stress, is phosphorylated at Tyr-438 and Tyr-717 by ABL1, which leads to the activation of PRKD2 without increasing its catalytic activity, and mediates activation of NF-kappa-B. In response to the activation of the gastrin receptor CCKBR, is phosphorylated at Ser-244 by CSNK1D and CSNK1E, translocates to the nucleus, phosphorylates HDAC7, leading to nuclear export of HDAC7 and inhibition of HDAC7 transcriptional repression of NR4A1/NUR77. Upon TCR stimulation, is activated independently of ZAP70, translocates from the cytoplasm to the nucleus and is required for interleukin-2 (IL2) promoter up-regulation. During adaptive immune responses, is required in peripheral T-lymphocytes for the production of the effector cytokines IL2 and IFNG after TCR engagement and for optimal induction of antibody responses to antigens. In epithelial cells stimulated with lysophosphatidic acid (LPA), is activated through a PKC-dependent pathway and mediates LPA-stimulated interleukin-8 (IL8) secretion via a NF-kappa-B-dependent pathway. During TCR-induced T-cell activation, interacts with and is activated by the tyrosine kinase LCK, which results in the activation of the NFAT transcription factors. In the trans-Golgi network (TGN), regulates the fission of transport vesicles that are on their way to the plasma membrane and in polarized cells is involved in the transport of proteins from the TGN to the basolateral membrane. Plays an important role in endothelial cell proliferation and migration prior to angiogenesis, partly through modulation of the expression of KDR/VEGFR2 and FGFR1, two key growth factor receptors involved in angiogenesis. In secretory pathway, is required for the release of chromogranin-A (CHGA)-containing secretory granules from the TGN. Downstream of PRKCA, plays important roles in angiotensin-2-induced monocyte adhesion to endothelial cells. Plays a regulatory role in angiogenesis and tumor growth by phosphorylating a downstream mediator CIB1 isoform 2, resulting in vascular endothelial growth factor A (VEGFA) secretion. The chain is Serine/threonine-protein kinase D2 (PRKD2) from Homo sapiens (Human).